The primary structure comprises 136 residues: Small ribosomal subunit protein uS8c (136 aa).

It belongs to the universal ribosomal protein uS8 family. As to quaternary structure, part of the 30S ribosomal subunit.

The protein localises to the plastid. The protein resides in the chloroplast. Functionally, one of the primary rRNA binding proteins, it binds directly to 16S rRNA central domain where it helps coordinate assembly of the platform of the 30S subunit. The polypeptide is Small ribosomal subunit protein uS8c (rps8) (Agrostis stolonifera (Creeping bentgrass)).